The primary structure comprises 262 residues: Homeobox protein Nkx-6.3 (262 aa).

Residues 140 to 199 constitute a DNA-binding region (homeobox); that stretch reads KKHTRPTFTGHQIFALEKTFEQTKYLAGPERARLAYSLGMTESQVKVWFQNRRTKWRKKS. The disordered stretch occupies residues 197–237; it reads KKSALEPSSSTPRAPGGASGDRAASENEDDEYNKPLDPDSD.

In terms of tissue distribution, expressed in the developing CNS and gastro-intestinal tract.

It localises to the nucleus. Its function is as follows. Putative transcription factor, which may be involved in patterning of central nervous system and pancreas. This is Homeobox protein Nkx-6.3 (Nkx6-3) from Mus musculus (Mouse).